Reading from the N-terminus, the 407-residue chain is Substance-P receptor (407 aa).

Topologically, residues 1–31 are extracellular; sequence MDNVLPMDSDLFPNISTNTSESNQFVQPTWQ. Asn-14 and Asn-18 each carry an N-linked (GlcNAc...) asparagine glycan. A helical membrane pass occupies residues 32–54; the sequence is IVLWAAAYTVIVVTSVVGNVVVI. Residues 55–64 lie on the Cytoplasmic side of the membrane; that stretch reads WIILAHKRMR. A helical transmembrane segment spans residues 65–86; the sequence is TVTNYFLVNLAFAEACMAAFNT. At 87–106 the chain is on the extracellular side; the sequence is VVNFTYAVHNVWYYGLFYCK. Cysteines 105 and 180 form a disulfide. A helical membrane pass occupies residues 107–128; sequence FHNFFPIAALFASIYSMTAVAF. The Cytoplasmic portion of the chain corresponds to 129–148; sequence DRYMAIIHPLQPRLSATATK. Residues 149-169 traverse the membrane as a helical segment; the sequence is VVIFVIWVLALLLAFPQGYYS. Over 170–194 the chain is Extracellular; that stretch reads TTETMPSRVVCMIEWPEHPNRTYEK. The chain crosses the membrane as a helical span at residues 195 to 219; it reads AYHICVTVLIYFLPLLVIGYAYTVV. Topologically, residues 220-248 are cytoplasmic; sequence GITLWASEIPGDSSDRYHEQVSAKRKVVK. A helical membrane pass occupies residues 249–270; that stretch reads MMIVVVCTFAICWLPFHVFFLL. At 271 to 283 the chain is on the extracellular side; the sequence is PYINPDLYLKKFI. The helical transmembrane segment at 284–308 threads the bilayer; sequence QQVYLASMWLAMSSTMYNPIIYCCL. Over 309–407 the chain is Cytoplasmic; the sequence is NDRFRLGFKH…SSSFYSNMLA (99 aa). The S-palmitoyl cysteine moiety is linked to residue Cys-322. Residues 362-407 form a disordered region; it reads VGAHEEEPEEGPKATPSSLDLTSNGSSRSNSKTMTESSSFYSNMLA. The span at 376–407 shows a compositional bias: polar residues; it reads TPSSLDLTSNGSSRSNSKTMTESSSFYSNMLA.

The protein belongs to the G-protein coupled receptor 1 family. As to quaternary structure, interacts with ARRB1.

It localises to the cell membrane. This is a receptor for the tachykinin neuropeptide substance P. It is probably associated with G proteins that activate a phosphatidylinositol-calcium second messenger system. The rank order of affinity of this receptor to tachykinins is: substance P &gt; substance K &gt; neuromedin-K. In Rattus norvegicus (Rat), this protein is Substance-P receptor (Tacr1).